Here is a 473-residue protein sequence, read N- to C-terminus: Glucose-1-phosphate adenylyltransferase small subunit, chloroplastic/amyloplastic (473 aa).

Residues 1–36 (MDVPLASKTFPSPSPSKREQCNIDGHKSSSKHADLN) are disordered. Residues 16–36 (SKREQCNIDGHKSSSKHADLN) are compositionally biased toward basic and acidic residues.

It belongs to the bacterial/plant glucose-1-phosphate adenylyltransferase family. As to quaternary structure, heterotetramer. Abundantly expressed in the whole grains, a slightly less abundant expression is seen in leaves, while a low level expression is seen in the roots. A greater expression is seen in the endosperm than in the embryo and pericarp layers.

It is found in the plastid. Its subcellular location is the chloroplast. The protein resides in the amyloplast. It carries out the reaction alpha-D-glucose 1-phosphate + ATP + H(+) = ADP-alpha-D-glucose + diphosphate. It functions in the pathway glycan biosynthesis; starch biosynthesis. Insensitive to 3'phosphoglycerate and orthophosphate. In terms of biological role, this protein plays a role in synthesis of starch. It catalyzes the synthesis of the activated glycosyl donor, ADP-glucose from Glc-1-P and ATP. The protein is Glucose-1-phosphate adenylyltransferase small subunit, chloroplastic/amyloplastic (AGP-S) of Triticum aestivum (Wheat).